The following is a 349-amino-acid chain: AdoMet-dependent heme synthase (349 aa).

The Radical SAM core domain occupies 5–214 (TNAPRLIAWE…LHWFYEMQKE (210 aa)). [4Fe-4S] cluster-binding residues include C19, C23, and C26.

This sequence belongs to the radical SAM superfamily. [4Fe-4S] cluster serves as cofactor.

It carries out the reaction Fe-coproporphyrin III + 2 S-adenosyl-L-methionine = heme b + 2 5'-deoxyadenosine + 2 L-methionine + 2 CO2. It functions in the pathway porphyrin-containing compound metabolism; protoheme biosynthesis. Functionally, involved in siroheme-dependent heme b biosynthesis. Catalyzes the conversion of Fe-coproporphyrin III into heme by the oxidative decarboxylation of two propionate side chains. This chain is AdoMet-dependent heme synthase, found in Methanosarcina barkeri (strain Fusaro / DSM 804).